A 263-amino-acid chain; its full sequence is Endonuclease 8 (263 aa).

Proline 2 acts as the Schiff-base intermediate with DNA in catalysis. Glutamate 3 serves as the catalytic Proton donor. Residue lysine 53 is the Proton donor; for beta-elimination activity of the active site. The DNA site is built by glutamine 70, arginine 125, and asparagine 169. The FPG-type zinc finger occupies 229–263 (KVFHRDGERCERCGGVIEKTTLSSRPFYWCPGCQH). Arginine 253 functions as the Proton donor; for delta-elimination activity in the catalytic mechanism.

The protein belongs to the FPG family. Zn(2+) serves as cofactor.

The enzyme catalyses 2'-deoxyribonucleotide-(2'-deoxyribose 5'-phosphate)-2'-deoxyribonucleotide-DNA = a 3'-end 2'-deoxyribonucleotide-(2,3-dehydro-2,3-deoxyribose 5'-phosphate)-DNA + a 5'-end 5'-phospho-2'-deoxyribonucleoside-DNA + H(+). In terms of biological role, involved in base excision repair of DNA damaged by oxidation or by mutagenic agents. Acts as a DNA glycosylase that recognizes and removes damaged bases. Has a preference for oxidized pyrimidines, such as thymine glycol, 5,6-dihydrouracil and 5,6-dihydrothymine. Has AP (apurinic/apyrimidinic) lyase activity and introduces nicks in the DNA strand. Cleaves the DNA backbone by beta-delta elimination to generate a single-strand break at the site of the removed base with both 3'- and 5'-phosphates. The sequence is that of Endonuclease 8 from Klebsiella pneumoniae (strain 342).